A 784-amino-acid chain; its full sequence is LPS-assembly protein LptD (784 aa).

The first 24 residues, M1–A24, serve as a signal peptide directing secretion. Disulfide bonds link C31-C724 and C173-C725.

The protein belongs to the LptD family. As to quaternary structure, component of the lipopolysaccharide transport and assembly complex. Interacts with LptE and LptA. In terms of processing, contains two intramolecular disulfide bonds.

The protein resides in the cell outer membrane. Functionally, together with LptE, is involved in the assembly of lipopolysaccharide (LPS) at the surface of the outer membrane. The chain is LPS-assembly protein LptD from Shigella sonnei (strain Ss046).